The chain runs to 219 residues: 2,5-diamino-6-ribosylamino-4(3H)-pyrimidinone 5'-phosphate reductase (219 aa).

Residues threonine 52, aspartate 56, 87–90 (SRCR), valine 134, and 156–159 (GGTL) contribute to the NADP(+) site.

It belongs to the HTP reductase family. In terms of assembly, homodimer.

The enzyme catalyses 2,5-diamino-6-(1-D-ribitylamino)pyrimidin-4(3H)-one 5'-phosphate + NADP(+) = 2,5-diamino-6-(1-D-ribosylamino)pyrimidin-4(3H)-one 5'-phosphate + NADPH + H(+). The catalysed reaction is 2,5-diamino-6-(1-D-ribitylamino)pyrimidin-4(3H)-one 5'-phosphate + NAD(+) = 2,5-diamino-6-(1-D-ribosylamino)pyrimidin-4(3H)-one 5'-phosphate + NADH + H(+). Its pathway is cofactor biosynthesis; riboflavin biosynthesis. In terms of biological role, catalyzes an early step in riboflavin biosynthesis, the NADPH-dependent reduction of the ribose side chain of 2,5-diamino-6-ribosylamino-4(3H)-pyrimidinone 5'-phosphate, yielding 2,5-diamino-6-ribitylamino-4(3H)-pyrimidinone 5'-phosphate. The sequence is that of 2,5-diamino-6-ribosylamino-4(3H)-pyrimidinone 5'-phosphate reductase from Archaeoglobus fulgidus (strain ATCC 49558 / DSM 4304 / JCM 9628 / NBRC 100126 / VC-16).